The chain runs to 467 residues: uncharacterized protein (467 aa).

This is an uncharacterized protein from Acanthamoeba polyphaga (Amoeba).